Consider the following 311-residue polypeptide: Acetaldehyde dehydrogenase 1 (311 aa).

Residue serine 11 to isoleucine 14 coordinates NAD(+). The active-site Acyl-thioester intermediate is cysteine 129. NAD(+)-binding positions include serine 161–asparagine 169 and asparagine 288.

The protein belongs to the acetaldehyde dehydrogenase family.

It carries out the reaction acetaldehyde + NAD(+) + CoA = acetyl-CoA + NADH + H(+). This chain is Acetaldehyde dehydrogenase 1, found in Novosphingobium aromaticivorans (strain ATCC 700278 / DSM 12444 / CCUG 56034 / CIP 105152 / NBRC 16084 / F199).